A 295-amino-acid polypeptide reads, in one-letter code: 4-hydroxy-tetrahydrodipicolinate synthase (295 aa).

Thr46 is a binding site for pyruvate. The active-site Proton donor/acceptor is Tyr134. Lys162 acts as the Schiff-base intermediate with substrate in catalysis. Ile205 contributes to the pyruvate binding site.

This sequence belongs to the DapA family. As to quaternary structure, homotetramer; dimer of dimers.

The protein resides in the cytoplasm. It carries out the reaction L-aspartate 4-semialdehyde + pyruvate = (2S,4S)-4-hydroxy-2,3,4,5-tetrahydrodipicolinate + H2O + H(+). The protein operates within amino-acid biosynthesis; L-lysine biosynthesis via DAP pathway; (S)-tetrahydrodipicolinate from L-aspartate: step 3/4. Catalyzes the condensation of (S)-aspartate-beta-semialdehyde [(S)-ASA] and pyruvate to 4-hydroxy-tetrahydrodipicolinate (HTPA). The chain is 4-hydroxy-tetrahydrodipicolinate synthase from Anaeromyxobacter dehalogenans (strain 2CP-1 / ATCC BAA-258).